Consider the following 156-residue polypeptide: Endoribonuclease YbeY (156 aa).

3 residues coordinate Zn(2+): histidine 117, histidine 121, and histidine 127.

Belongs to the endoribonuclease YbeY family. Requires Zn(2+) as cofactor.

The protein localises to the cytoplasm. Functionally, single strand-specific metallo-endoribonuclease involved in late-stage 70S ribosome quality control and in maturation of the 3' terminus of the 16S rRNA. The chain is Endoribonuclease YbeY from Herminiimonas arsenicoxydans.